Here is a 265-residue protein sequence, read N- to C-terminus: Tryptophan synthase alpha chain (265 aa).

Active-site proton acceptor residues include glutamate 49 and glutamate 60.

This sequence belongs to the TrpA family. Tetramer of two alpha and two beta chains.

It catalyses the reaction (1S,2R)-1-C-(indol-3-yl)glycerol 3-phosphate + L-serine = D-glyceraldehyde 3-phosphate + L-tryptophan + H2O. It functions in the pathway amino-acid biosynthesis; L-tryptophan biosynthesis; L-tryptophan from chorismate: step 5/5. Its function is as follows. The alpha subunit is responsible for the aldol cleavage of indoleglycerol phosphate to indole and glyceraldehyde 3-phosphate. The chain is Tryptophan synthase alpha chain from Janthinobacterium sp. (strain Marseille) (Minibacterium massiliensis).